A 345-amino-acid chain; its full sequence is NADPH dehydrogenase (345 aa).

Ser-23–Cys-26 contacts FMN. Residue Tyr-28 participates in substrate binding. The FMN site is built by Ala-60 and Gln-102. Residue His-164 to His-167 participates in substrate binding. FMN-binding positions include Arg-215 and Gly-307–Arg-308.

Belongs to the NADH:flavin oxidoreductase/NADH oxidase family. NamA subfamily. Homotetramer. FMN is required as a cofactor.

It catalyses the reaction A + NADPH + H(+) = AH2 + NADP(+). Its function is as follows. Catalyzes the reduction of the double bond of an array of alpha,beta-unsaturated aldehydes and ketones. It also reduces the nitro group of nitroester and nitroaromatic compounds. It could have a role in detoxification processes. This Bacillus mycoides (strain KBAB4) (Bacillus weihenstephanensis) protein is NADPH dehydrogenase.